Consider the following 146-residue polypeptide: 3-dehydroquinate dehydratase (146 aa).

Tyrosine 23 (proton acceptor) is an active-site residue. Substrate-binding residues include asparagine 74, histidine 80, and aspartate 87. Catalysis depends on histidine 100, which acts as the Proton donor. Substrate is bound by residues 101–102 (IS) and arginine 111.

It belongs to the type-II 3-dehydroquinase family. Homododecamer.

It catalyses the reaction 3-dehydroquinate = 3-dehydroshikimate + H2O. It participates in metabolic intermediate biosynthesis; chorismate biosynthesis; chorismate from D-erythrose 4-phosphate and phosphoenolpyruvate: step 3/7. Functionally, catalyzes a trans-dehydration via an enolate intermediate. The protein is 3-dehydroquinate dehydratase of Bacillus cereus (strain ATCC 14579 / DSM 31 / CCUG 7414 / JCM 2152 / NBRC 15305 / NCIMB 9373 / NCTC 2599 / NRRL B-3711).